The primary structure comprises 116 residues: Aspartate 1-decarboxylase (116 aa).

S25 acts as the Schiff-base intermediate with substrate; via pyruvic acid in catalysis. Position 25 is a pyruvic acid (Ser) (S25). T57 lines the substrate pocket. Y58 acts as the Proton donor in catalysis. 73–75 (GAA) lines the substrate pocket.

Belongs to the PanD family. Heterooctamer of four alpha and four beta subunits. It depends on pyruvate as a cofactor. Is synthesized initially as an inactive proenzyme, which is activated by self-cleavage at a specific serine bond to produce a beta-subunit with a hydroxyl group at its C-terminus and an alpha-subunit with a pyruvoyl group at its N-terminus.

The protein localises to the cytoplasm. It carries out the reaction L-aspartate + H(+) = beta-alanine + CO2. The protein operates within cofactor biosynthesis; (R)-pantothenate biosynthesis; beta-alanine from L-aspartate: step 1/1. Functionally, catalyzes the pyruvoyl-dependent decarboxylation of aspartate to produce beta-alanine. This is Aspartate 1-decarboxylase from Leptospira interrogans serogroup Icterohaemorrhagiae serovar copenhageni (strain Fiocruz L1-130).